We begin with the raw amino-acid sequence, 904 residues long: Envelope glycoprotein (904 aa).

Residues 1 to 726 (MDQDLDGAER…LFDWTSWKDW (726 aa)) lie on the Extracellular side of the membrane. N-linked (GlcNAc...) asparagine; by host glycans are attached at residues N131, N255, N277, N296, N329, N367, N376, N385, N410, N427, N432, N452, N491, N509, and N541. Residues 556–576 (AVGLAIFLLVLAIMAITSSLV) are fusion peptide. Residues 588 to 638 (AKVVERVVQNVSYIAQTQDQFTHLFRNINNRLNVLHHRVSYLEYVEEIRQK) adopt a coiled-coil conformation. N597 carries N-linked (GlcNAc...) asparagine; by host glycosylation. The tract at residues 615–631 (INNRLNVLHHRVSYLEY) is immunosuppression. 2 N-linked (GlcNAc...) asparagine; by host glycosylation sites follow: N663 and N694. Positions 676–712 (DEYDKIEEKILKIRVDWLNSSLSDTQDTFGLETSIFD) form a coiled coil. The chain crosses the membrane as a helical span at residues 727 to 747 (IKIIIVIIVLWLLIKILLGML). The Cytoplasmic segment spans residues 748–904 (RSCAKVSQNY…AWYEGLRGSQ (157 aa)). Disordered regions lie at residues 761–783 (PAEE…PASG) and 862–904 (GGTS…RGSQ). Residues 878–887 (WTGSREQNNP) show a composition bias toward polar residues.

In terms of assembly, the mature envelope protein (Env) consists of a trimer of SU-TM heterodimers attached by non-covalent interactions or by a labile interchain disulfide bond. Post-translationally, specific enzymatic cleavages in vivo yield mature proteins. Envelope glycoproteins are synthesized as an inactive precursor that is N-glycosylated and processed likely by host cell furin or by a furin-like protease in the Golgi to yield the mature SU and TM proteins. The cleavage site between SU and TM requires the minimal sequence [KR]-X-[KR]-R.

The protein resides in the virion membrane. The protein localises to the host cell membrane. In terms of biological role, the surface protein (SU) attaches the virus to the host cell by binding to its receptor. This interaction triggers the refolding of the transmembrane protein (TM) and is thought to activate its fusogenic potential by unmasking its fusion peptide. Fusion occurs at the host cell plasma membrane. The transmembrane protein (TM) acts as a class I viral fusion protein. Under the current model, the protein has at least 3 conformational states: pre-fusion native state, pre-hairpin intermediate state, and post-fusion hairpin state. During viral and target cell membrane fusion, the coiled coil regions (heptad repeats) assume a trimer-of-hairpins structure, positioning the fusion peptide in close proximity to the C-terminal region of the ectodomain. The formation of this structure appears to drive apposition and subsequent fusion of viral and target cell membranes. Membranes fusion leads to delivery of the nucleocapsid into the cytoplasm. The protein is Envelope glycoprotein (env) of Bovine immunodeficiency virus (strain R29) (BIV).